The chain runs to 328 residues: GATA transcription factor 17 (328 aa).

The disordered stretch occupies residues 1 to 68 (MSGHHEAKPY…EEYEGGEGVP (68 aa)). Positions 14 to 29 (RGPAPADEEAAPAAAA) are enriched in low complexity. Composition is skewed to acidic residues over residues 30–39 (DEAEAEAEVE) and 47–63 (EQEY…EYEG). The Tify domain maps to 100 to 135 (PHVASNTLTLSFQGEVYVFESVSAERVQAVLLLLGG). The 43-residue stretch at 161-203 (RMASLMRFREKRKERNFDKKIRYTVRKEVALRMQRNRGQFTSS) folds into the CCT domain. The segment at 198–231 (GQFTSSKSKAEEATSVITSSEGSPNWGAVEGRPP) is disordered. The GATA-type zinc-finger motif lies at 236 to 263 (CHHCGISAASTPMMRRGPDGPRTLCNAC).

Belongs to the type IV zinc-finger family. Class C subfamily.

Its subcellular location is the nucleus. Transcriptional activator that specifically binds 5'-GATA-3' or 5'-GAT-3' motifs within gene promoters. The polypeptide is GATA transcription factor 17 (Oryza sativa subsp. japonica (Rice)).